We begin with the raw amino-acid sequence, 524 residues long: Apoptosis inhibitor 5 (524 aa).

Residues 2–360 (PTVEELYRNY…HQLGRKLPDF (359 aa)) are ARM-like and Heat-like helical repeats. Lysine 251 carries the N6-acetyllysine modification. Residues 370-391 (LKDFKIRLQYFARGLQVYIRQL) are leucine-zipper. Threonine 399 carries the post-translational modification Phosphothreonine. Residues 452-524 (GQKRASEDTT…RGNRSRGRLY (73 aa)) form a disordered region. The short motif at 454–475 (KRASEDTTSGSPPKKSSAGPKR) is the Nuclear localization signal element. A phosphoserine mark is found at serine 462, serine 464, and serine 469. The span at 462-472 (SGSPPKKSSAG) shows a compositional bias: low complexity. The segment covering 487 to 497 (KYSSNLGNFNY) has biased composition (polar residues). Omega-N-methylarginine is present on arginine 500.

It belongs to the API5 family. In terms of assembly, monomer. Interacts with FGF2 and ACIN1. In terms of processing, acetylation at Lys-251 impairs antiapoptotic function. As to expression, expressed in all tissues tested, including heart, brain, placenta, lung, liver, skeletal muscle, kidney and pancreas. Highest levels in heart, pancreas and placenta. Highly expressed in several cancers. Preferentially expressed in squamous cell carcinoma versus adenocarcinoma in non-small cell lung cancer.

The protein resides in the nucleus. It is found in the cytoplasm. In terms of biological role, antiapoptotic factor that may have a role in protein assembly. Negatively regulates ACIN1. By binding to ACIN1, it suppresses ACIN1 cleavage from CASP3 and ACIN1-mediated DNA fragmentation. Also known to efficiently suppress E2F1-induced apoptosis. Its depletion enhances the cytotoxic action of the chemotherapeutic drugs. In Homo sapiens (Human), this protein is Apoptosis inhibitor 5.